A 260-amino-acid polypeptide reads, in one-letter code: Thrombin-like enzyme 2 (260 aa).

The first 18 residues, 1-18 (MMLIRVLANLLILQLSYA), serve as a signal peptide directing secretion. Residues 19 to 24 (QKSSEL) constitute a propeptide that is removed on maturation. Positions 25–251 (VIGGDECNIN…HLDWIQSIIA (227 aa)) constitute a Peptidase S1 domain. 6 disulfide bridges follow: C31-C165, C52-C68, C102-C258, C144-C212, C176-C191, and C202-C227. The active-site Charge relay system is the H67. N105 is a glycosylation site (N-linked (GlcNAc...) asparagine). D112 (charge relay system) is an active-site residue. Residues N156 and N172 are each glycosylated (N-linked (GlcNAc...) asparagine). S206 (charge relay system) is an active-site residue. N253 carries an N-linked (GlcNAc...) asparagine glycan.

This sequence belongs to the peptidase S1 family. Snake venom subfamily. Monomer. As to expression, expressed by the venom gland.

The protein localises to the secreted. Its function is as follows. Thrombin-like snake venom serine protease. This chain is Thrombin-like enzyme 2, found in Trimeresurus albolabris (White-lipped pit viper).